The following is a 268-amino-acid chain: Putative esterase/lipase 2 (268 aa).

Residue His-28 is part of the active site. His-96 acts as the Charge relay system in catalysis.

Belongs to the lipase/esterase LIP3/BchO family.

The protein is Putative esterase/lipase 2 of Mycoplasma pneumoniae (strain ATCC 29342 / M129 / Subtype 1) (Mycoplasmoides pneumoniae).